The chain runs to 435 residues: Dual specificity mitogen-activated protein kinase kinase jkk-1 (435 aa).

A compositionally biased stretch (basic and acidic residues) spans 35 to 49 (RDRRSTSVDQKHKEC). The disordered stretch occupies residues 35–90 (RDRRSTSVDQKHKECSSTSSSPQHQRPNNIGYLTSPMERKFTPLSMKPSPSRRDTE). A compositionally biased stretch (polar residues) spans 50 to 66 (SSTSSSPQHQRPNNIGY). Residues 122-385 (IHIISLLGSG…YRQLMKHDFY (264 aa)) enclose the Protein kinase domain. ATP contacts are provided by residues 128-136 (LGSGSCGVV) and Lys149. The active-site Proton acceptor is Asp246.

It belongs to the protein kinase superfamily. STE Ser/Thr protein kinase family. MAP kinase kinase subfamily. As to quaternary structure, interacts with unc-16. The cofactor is Mg(2+). Expressed in most neurons, including nerve ring, head ganglions, dorsal and ventral nerve cords and tail ganglions.

Its subcellular location is the cytoplasm. The protein resides in the perikaryon. The protein localises to the cell projection. It is found in the axon. The catalysed reaction is L-seryl-[protein] + ATP = O-phospho-L-seryl-[protein] + ADP + H(+). It carries out the reaction L-threonyl-[protein] + ATP = O-phospho-L-threonyl-[protein] + ADP + H(+). It catalyses the reaction L-tyrosyl-[protein] + ATP = O-phospho-L-tyrosyl-[protein] + ADP + H(+). Functionally, dual specificity protein kinase which acts as an essential component of the JNK signal transduction pathway. May phosphorylate jnk-1. Plays a role in coordinating locomotion via D-type GABAergic motoneurons and in regulating synaptic vesicle transport downstream of adapter protein unc-16 and probably by activating jnk-1. Positively regulates lifespan. Upon environmental stress such as heat stress regulates daf-16 nuclear translocation probably by activating jnk-1. Regulates germline cell apoptosis in response to heavy metals such as Cu(2+) and to arsenite. The sequence is that of Dual specificity mitogen-activated protein kinase kinase jkk-1 from Caenorhabditis elegans.